Here is a 337-residue protein sequence, read N- to C-terminus: UDP-N-acetylenolpyruvoylglucosamine reductase (337 aa).

Residues 16–187 (ALPGRAARYQ…TSVIFRLAKA (172 aa)) form the FAD-binding PCMH-type domain. R160 is a catalytic residue. The Proton donor role is filled by S237. Residue E333 is part of the active site.

The cofactor is FAD.

The protein localises to the cytoplasm. The enzyme catalyses UDP-N-acetyl-alpha-D-muramate + NADP(+) = UDP-N-acetyl-3-O-(1-carboxyvinyl)-alpha-D-glucosamine + NADPH + H(+). It participates in cell wall biogenesis; peptidoglycan biosynthesis. Its function is as follows. Cell wall formation. The chain is UDP-N-acetylenolpyruvoylglucosamine reductase from Dechloromonas aromatica (strain RCB).